Consider the following 850-residue polypeptide: MIGKMLTKVFGSKNDRVLKQIRPLVTRINDLESTIKPLGDAALVAKTVEFKERIAKGESLKDLLPESFAVMREAASRVLGERHYDVQLVGGIILHKGRIAEMKTGEGKTLTSTLPVYLNGLSGKGVHVVTVNDYLAARDAEWMGQVYDFLGMSWDKIIHGMDDVERRAAYAADITYGTNNEFGFDYLRDNMKFELDDFCQRGFNFAIVDEVDSILIDEARTPLIISGPAEMSTELYDNINSIMYNFKVEEHYTVDEKARTVSLTDDGIGLGEELLDLENLCDPSSIEQLHHLNQALKAHVLFQRDVDYIVNDGQVVIVDEFTGRTMEGRRYSDGLHQALEAKENVKVEQENQTLAAITFQNYFRMYDKLAGMTGTADTEAAEFKKIYDLDVVLMPTNQPMVRDDYADVIFKNEDAKYRAVVREIAEMHEKGRPVLVGTISIDVSEKIADMLTKAKVPHEVLNAKQHAREAEIITAAGQVGRVTIATNMAGRGTDIKLGEGVRELGGLHIVATSRHESRRIDNQLRGRAGRQGDPGSSRFYLSLEDDLLRIFGSGRVSGIMDKLGMEEDEPIEHGMISRAIENAQRKVEGHNFDIRKHLLEYDDVMNKQREIVYQQRYEVLAGADVSAEIQEMVNDIVRNLASEFSDERLDSLDWDWAGCLERLQEAFSVQPEWSEETRTDIKFEELRDLIAGVVAQKYREQEEENGADTQRQLEKILLLQVVDGLWKDHLLSMDYLKEGIGLRGYGQKNPLNEYKREAFQLFGHLMETVKSQVVSSLMRVRVVHENDVDRMEEERRRRHEEEMQRIQALVPAGNADEEHQQPAHVDKIGRNTPCPCGSGKKYKKCCGKLS.

Residues Gln-87, 105 to 109, and Asp-494 each bind ATP; that span reads GEGKT. 4 residues coordinate Zn(2+): Cys-834, Cys-836, Cys-845, and Cys-846.

It belongs to the SecA family. Monomer and homodimer. Part of the essential Sec protein translocation apparatus which comprises SecA, SecYEG and auxiliary proteins SecDF-YajC and YidC. Zn(2+) is required as a cofactor.

The protein resides in the cell inner membrane. Its subcellular location is the cytoplasm. It catalyses the reaction ATP + H2O + cellular proteinSide 1 = ADP + phosphate + cellular proteinSide 2.. In terms of biological role, part of the Sec protein translocase complex. Interacts with the SecYEG preprotein conducting channel. Has a central role in coupling the hydrolysis of ATP to the transfer of proteins into and across the cell membrane, serving as an ATP-driven molecular motor driving the stepwise translocation of polypeptide chains across the membrane. This Desulfotalea psychrophila (strain LSv54 / DSM 12343) protein is Protein translocase subunit SecA.